The following is a 32-amino-acid chain: Calcitonin (32 aa).

An intrachain disulfide couples C1 to C7. Proline amide is present on P32.

This sequence belongs to the calcitonin family.

The protein resides in the secreted. Calcitonin is a peptide hormone that causes a rapid but short-lived drop in the level of calcium and phosphate in blood by promoting the incorporation of those ions in the bones. Calcitonin function is mediated by the calcitonin receptor/CALCR and the CALCR-RAMP2 (AMYR2) receptor complex. This is Calcitonin (CALCA) from Sus scrofa (Pig).